The chain runs to 405 residues: Bestrophin homolog 14 (405 aa).

A run of 4 helical transmembrane segments spans residues 28-48 (LIGF…LLDE), 63-83 (IGAQ…LIVA), 223-243 (LVYT…CLIG), and 256-276 (EITI…LGWL).

This sequence belongs to the anion channel-forming bestrophin (TC 1.A.46) family. Calcium-sensitive chloride channel subfamily.

The protein localises to the membrane. The chain is Bestrophin homolog 14 (best-14) from Caenorhabditis elegans.